A 504-amino-acid chain; its full sequence is Probable cytosol aminopeptidase (504 aa).

Mn(2+) is bound by residues lysine 274 and aspartate 279. Lysine 286 is an active-site residue. Residues aspartate 297, aspartate 356, and glutamate 358 each contribute to the Mn(2+) site. Residue arginine 360 is part of the active site.

This sequence belongs to the peptidase M17 family. The cofactor is Mn(2+).

Its subcellular location is the cytoplasm. The catalysed reaction is Release of an N-terminal amino acid, Xaa-|-Yaa-, in which Xaa is preferably Leu, but may be other amino acids including Pro although not Arg or Lys, and Yaa may be Pro. Amino acid amides and methyl esters are also readily hydrolyzed, but rates on arylamides are exceedingly low.. It carries out the reaction Release of an N-terminal amino acid, preferentially leucine, but not glutamic or aspartic acids.. In terms of biological role, presumably involved in the processing and regular turnover of intracellular proteins. Catalyzes the removal of unsubstituted N-terminal amino acids from various peptides. This chain is Probable cytosol aminopeptidase, found in Blochmanniella floridana.